Reading from the N-terminus, the 469-residue chain is MNPNQKIITIGSVSLIIATICFLMQIAILVTTVTLHFKQYECDSPANNQVMPCEPIIIERNITEIVYLTNTTIEKEICPKLVEYRNWSKPQCKITGFAPFSKDNSIRLSAGGDIWVTREPYVSCDPGKCYQFALGQGTTLDNKHSNDTIHDRTPHRTLLMNELGVPFHLGTRQVCIAWSSSSCHDGKAWLHVCVTGYDKNATASFIYDGRLVDSIGSWSQNILRTQESECVCINGTCTVVMTDGSASGRADTKILFIEEGKIVHISPLSGSAQHVEECSCYPRYPGVRCICRDNWKGSNRPVVDINVKDYSIDSSYVCSGLVGDTPRNNDRSSNSYCRNPNNEKGNHGVKGWAFDDGNDVWMGRTISEDSRSGYETFKVIGGWSTPNSKLQINRQVIVDSDNRSGYSGIFSVEGKSCINRCFYVELIRGREQETRVWWTSNSIVVFCGTSGTYGTGSWPDGADINLMPI.

Residues 1-9 (MNPNQKIIT) are Intravirion-facing. The helical transmembrane segment at 10–30 (IGSVSLIIATICFLMQIAILV) threads the bilayer. Positions 11 to 33 (GSVSLIIATICFLMQIAILVTTV) are involved in apical transport and lipid raft association. Topologically, residues 31-469 (TTVTLHFKQY…DGADINLMPI (439 aa)) are virion surface. Residues 36 to 88 (HFKQYECDSPANNQVMPCEPIIIERNITEIVYLTNTTIEKEICPKLVEYRNWS) are hypervariable stalk region. N-linked (GlcNAc...) asparagine; by host glycans are attached at residues Asn61, Asn70, and Asn86. Positions 91–469 (QCKITGFAPF…DGADINLMPI (379 aa)) are head of neuraminidase. 8 cysteine pairs are disulfide-bonded: Cys92–Cys417, Cys124–Cys129, Cys183–Cys230, Cys232–Cys237, Cys278–Cys291, Cys280–Cys289, Cys318–Cys337, and Cys421–Cys447. Arg118 contributes to the substrate binding site. A glycan (N-linked (GlcNAc...) asparagine; by host) is linked at Asn146. Asp151 (proton donor/acceptor) is an active-site residue. Arg152 lines the substrate pocket. N-linked (GlcNAc...) asparagine; by host glycosylation is found at Asn200 and Asn234. 276-277 (EE) contacts substrate. Arg292 is a binding site for substrate. Residues Asp293, Gly297, and Asp324 each contribute to the Ca(2+) site. Arg371 lines the substrate pocket. N-linked (GlcNAc...) asparagine; by host glycosylation is present at Asn402. Tyr406 (nucleophile) is an active-site residue.

The protein belongs to the glycosyl hydrolase 34 family. As to quaternary structure, homotetramer. The cofactor is Ca(2+). N-glycosylated.

The protein resides in the virion membrane. It localises to the host apical cell membrane. It catalyses the reaction Hydrolysis of alpha-(2-&gt;3)-, alpha-(2-&gt;6)-, alpha-(2-&gt;8)- glycosidic linkages of terminal sialic acid residues in oligosaccharides, glycoproteins, glycolipids, colominic acid and synthetic substrates.. Its activity is regulated as follows. Inhibited by the neuraminidase inhibitors zanamivir (Relenza) and oseltamivir (Tamiflu). These drugs interfere with the release of progeny virus from infected cells and are effective against all influenza strains. Resistance to neuraminidase inhibitors is quite rare. Its function is as follows. Catalyzes the removal of terminal sialic acid residues from viral and cellular glycoconjugates. Cleaves off the terminal sialic acids on the glycosylated HA during virus budding to facilitate virus release. Additionally helps virus spread through the circulation by further removing sialic acids from the cell surface. These cleavages prevent self-aggregation and ensure the efficient spread of the progeny virus from cell to cell. Otherwise, infection would be limited to one round of replication. Described as a receptor-destroying enzyme because it cleaves a terminal sialic acid from the cellular receptors. May facilitate viral invasion of the upper airways by cleaving the sialic acid moieties on the mucin of the airway epithelial cells. Likely to plays a role in the budding process through its association with lipid rafts during intracellular transport. May additionally display a raft-association independent effect on budding. Plays a role in the determination of host range restriction on replication and virulence. Sialidase activity in late endosome/lysosome traffic seems to enhance virus replication. The sequence is that of Neuraminidase from Aves (whales).